Reading from the N-terminus, the 406-residue chain is Cysteine desulfurase (406 aa).

K226 bears the N6-(pyridoxal phosphate)lysine mark. C364 serves as the catalytic Cysteine persulfide intermediate.

Belongs to the class-V pyridoxal-phosphate-dependent aminotransferase family. Csd subfamily. Homodimer. Interacts with SufE and the SufBCD complex composed of SufB, SufC and SufD. The interaction with SufE is required to mediate the direct transfer of the sulfur atom from the S-sulfanylcysteine. Pyridoxal 5'-phosphate is required as a cofactor.

It localises to the cytoplasm. It catalyses the reaction (sulfur carrier)-H + L-cysteine = (sulfur carrier)-SH + L-alanine. The enzyme catalyses L-selenocysteine + AH2 = hydrogenselenide + L-alanine + A + H(+). Its pathway is cofactor biosynthesis; iron-sulfur cluster biosynthesis. Its function is as follows. Cysteine desulfurases mobilize the sulfur from L-cysteine to yield L-alanine, an essential step in sulfur metabolism for biosynthesis of a variety of sulfur-containing biomolecules. Component of the suf operon, which is activated and required under specific conditions such as oxidative stress and iron limitation. Acts as a potent selenocysteine lyase in vitro, that mobilizes selenium from L-selenocysteine. Selenocysteine lyase activity is however unsure in vivo. The chain is Cysteine desulfurase from Yersinia pestis bv. Antiqua (strain Antiqua).